Reading from the N-terminus, the 216-residue chain is Potassium-transporting ATPase KdpC subunit (216 aa).

The chain crosses the membrane as a helical span at residues 12 to 32 (LLGVSLLVFGLLYQGSLMAIG). Positions 197–207 (QNETDQNSDMN) are enriched in polar residues. Residues 197-216 (QNETDQNSDMNASEIANGDH) form a disordered region.

It belongs to the KdpC family. In terms of assembly, the system is composed of three essential subunits: KdpA, KdpB and KdpC. The complex also contains KdpF, a small non-essential subunit.

The protein localises to the cell membrane. Its function is as follows. Part of the high-affinity ATP-driven potassium transport (or Kdp) system, which catalyzes the hydrolysis of ATP coupled with the electrogenic transport of potassium into the cytoplasm. This subunit acts as a catalytic chaperone that increases the ATP-binding affinity of the ATP-hydrolyzing subunit KdpB by the formation of a transient KdpB/KdpC/ATP ternary complex. The Kdp system is essential for growth under K(+) limitation, and for survival under desiccation and salt crystal inclusion. The sequence is that of Potassium-transporting ATPase KdpC subunit from Halobacterium salinarum (strain ATCC 29341 / DSM 671 / R1).